We begin with the raw amino-acid sequence, 673 residues long: MQPPIRENMLRERTVRLQYGSRVEAVYVLGTQLWTDVYSAAPAGAKTFSLKHSEGVKVEVVRDGEAEEVVTNGKQRWALSPSSTLRLSMAQASTEASSDKVTVNYYEEEGSAPIDQAGLFLTAIEISLDVDADRDGEVEKNNPKKASWTWGPEGQGAILLVNCDRDTPWLPKEDCSDEKVYSKQDLQDMSQMILRTKGPDRLPAGYEIVLYISMSDSDKVGVFYVENPFFGQRYIHILGRQKLYHVVKYTGGSAELLFFVEGLCFPDESFSGLVSIHVSLLEYMAEGIPLTPIFTDTVMFRIAPWIMTPNILPPVSVFVCCMKDNYLFLKEVKNLVEKTNCELKVCFQYMNRGDRWIQDEIEFGYIEAPHKGFPVVLDSPRDGNLKDFPIKQLLGPDFGYVTREPLFETVTSLDSFGNLEVSPPVTVNGKEYPLGRILIGSSFPLSGGRRMTKVVRDFLQAQQVQAPVELYSDWLTVGHVDEFMTFIPIPGKKEFRLLMASTSACYQLFREKQKAGHGEAVMFKGLGGMSSKRITINKILSNESLTQENQYFQRCLDWNRDILKRELALTEKDIIDLPALFKMDENHQARAFFPNMVNMIVLDKDLGIPKPFGPQVEEECCLETHVRGLLEPLGLACTFIDDISAYHKFLGEVHCGTNVRRKPFTFKWWHMVP.

An N-acetylmethionine modification is found at methionine 1. Residues aspartate 131, aspartate 133, aspartate 135, glutamate 139, asparagine 162, aspartate 164, aspartate 166, aspartate 174, aspartate 177, lysine 179, aspartate 185, and aspartate 188 each coordinate Ca(2+). A Citrulline modification is found at arginine 352. The Ca(2+) site is built by glutamate 362, aspartate 397, phenylalanine 416, leucine 419, and glutamate 420. Cysteine 655 serves as the catalytic Nucleophile.

Belongs to the protein arginine deiminase family. Homodimer. Requires Ca(2+) as cofactor. In terms of tissue distribution, expressed in various tissues including muscle, uterus, spinal cord, salivary gland and pancreas.

The protein localises to the cytoplasm. The enzyme catalyses L-arginyl-[protein] + H2O = L-citrullyl-[protein] + NH4(+). Catalyzes the deimination of arginine residues of proteins. The sequence is that of Protein-arginine deiminase type-2 (Padi2) from Mus musculus (Mouse).